A 394-amino-acid chain; its full sequence is Peroxisomal membrane protein PEX25 (394 aa).

The segment covering 1–25 (MSQFGTTDIVSGSETPPYSGASYQD) has biased composition (polar residues). Positions 1-65 (MSQFGTTDIV…SRSDDEDSQA (65 aa)) are disordered. At 1-366 (MSQFGTTDIV…LNLKTPKGTY (366 aa)) the chain is on the cytoplasmic side. Residues 51-65 (SHTESSRSDDEDSQA) are compositionally biased toward basic and acidic residues. Ser-58, Ser-63, and Ser-289 each carry phosphoserine. Residues 367–383 (AVLSLGSGLTGLVKLWI) form a helical membrane-spanning segment. At 384–394 (TTKRSLCSSKD) the chain is on the lumenal side.

In terms of assembly, homooligomer. Interacts with PEX27 and PEX34.

Its subcellular location is the peroxisome membrane. Required for regulation of peroxisome size and maintenance. Has a role in the import of peroxisomal matrix proteins. Imports RHO1 into the peroxisome. Also promotes peroxisome division and biogenesis. This chain is Peroxisomal membrane protein PEX25 (PEX25), found in Saccharomyces cerevisiae (strain ATCC 204508 / S288c) (Baker's yeast).